Consider the following 368-residue polypeptide: 3-dehydroquinate synthase (368 aa).

NAD(+) is bound by residues 71–76, 105–109, 129–130, Lys-142, Lys-151, and 169–172; these read DGEAFK, GVVGD, TT, and TLRT. Residues Glu-184, His-247, and His-264 each contribute to the Zn(2+) site.

Belongs to the sugar phosphate cyclases superfamily. Dehydroquinate synthase family. Co(2+) serves as cofactor. Requires Zn(2+) as cofactor. NAD(+) is required as a cofactor.

Its subcellular location is the cytoplasm. It carries out the reaction 7-phospho-2-dehydro-3-deoxy-D-arabino-heptonate = 3-dehydroquinate + phosphate. It participates in metabolic intermediate biosynthesis; chorismate biosynthesis; chorismate from D-erythrose 4-phosphate and phosphoenolpyruvate: step 2/7. In terms of biological role, catalyzes the conversion of 3-deoxy-D-arabino-heptulosonate 7-phosphate (DAHP) to dehydroquinate (DHQ). This is 3-dehydroquinate synthase from Cupriavidus taiwanensis (strain DSM 17343 / BCRC 17206 / CCUG 44338 / CIP 107171 / LMG 19424 / R1) (Ralstonia taiwanensis (strain LMG 19424)).